A 552-amino-acid polypeptide reads, in one-letter code: Chaperonin GroEL (552 aa).

ATP is bound by residues 30–33 (TLGP), Lys51, 87–91 (DGTTT), Gly415, 480–482 (NAA), and Asp496.

This sequence belongs to the chaperonin (HSP60) family. As to quaternary structure, forms a cylinder of 14 subunits composed of two heptameric rings stacked back-to-back. Interacts with the co-chaperonin GroES.

Its subcellular location is the cytoplasm. The enzyme catalyses ATP + H2O + a folded polypeptide = ADP + phosphate + an unfolded polypeptide.. In terms of biological role, together with its co-chaperonin GroES, plays an essential role in assisting protein folding. The GroEL-GroES system forms a nano-cage that allows encapsulation of the non-native substrate proteins and provides a physical environment optimized to promote and accelerate protein folding. This is Chaperonin GroEL from Coxiella burnetii (strain RSA 331 / Henzerling II).